We begin with the raw amino-acid sequence, 80 residues long: Clavaspirin (80 aa).

An N-terminal signal peptide occupies residues 1 to 17; sequence MKTIILILLILGLGIDA. The propeptide occupies 18 to 29; it reads KSLEESKADEEK. Leu-52 carries the post-translational modification Leucine amide. A propeptide spanning residues 53-80 is cleaved from the precursor; it reads GDDQQDNGKFYGYYAEDNGKHWYDTGDQ.

Pharyngeal tissues and hemocytes.

Its subcellular location is the secreted. Exhibits broad-spectrum antimicrobial activity against both Gram-positive and Gram-negative bacteria. Has potent hemolytic activity. The sequence is that of Clavaspirin from Styela clava (Sea squirt).